A 541-amino-acid polypeptide reads, in one-letter code: Chaperonin GroEL (541 aa).

ATP-binding positions include 30-33 (TLGP), Lys51, 87-91 (DGTTT), Gly415, and Asp495.

Belongs to the chaperonin (HSP60) family. In terms of assembly, forms a cylinder of 14 subunits composed of two heptameric rings stacked back-to-back. Interacts with the co-chaperonin GroES.

It localises to the cytoplasm. It catalyses the reaction ATP + H2O + a folded polypeptide = ADP + phosphate + an unfolded polypeptide.. Functionally, together with its co-chaperonin GroES, plays an essential role in assisting protein folding. The GroEL-GroES system forms a nano-cage that allows encapsulation of the non-native substrate proteins and provides a physical environment optimized to promote and accelerate protein folding. The sequence is that of Chaperonin GroEL from Pantoea ananas (Erwinia uredovora).